The chain runs to 284 residues: L-ribulose-5-phosphate 3-epimerase UlaE (284 aa).

Belongs to the L-ribulose-5-phosphate 3-epimerase family.

The catalysed reaction is L-ribulose 5-phosphate = L-xylulose 5-phosphate. It participates in cofactor degradation; L-ascorbate degradation; D-xylulose 5-phosphate from L-ascorbate: step 3/4. Its function is as follows. Catalyzes the isomerization of L-xylulose-5-phosphate to L-ribulose-5-phosphate. Is involved in the anaerobic L-ascorbate utilization. This Escherichia coli (strain SMS-3-5 / SECEC) protein is L-ribulose-5-phosphate 3-epimerase UlaE.